Consider the following 332-residue polypeptide: Ribose-phosphate pyrophosphokinase (332 aa).

55-57 (DGE) contacts ATP. Mg(2+) contacts are provided by His-148 and Asp-187. Lys-211 is an active-site residue. Residues Arg-213, Asp-237, and 241–245 (DTGGT) contribute to the D-ribose 5-phosphate site.

This sequence belongs to the ribose-phosphate pyrophosphokinase family. Class I subfamily. As to quaternary structure, homohexamer. Mg(2+) is required as a cofactor.

Its subcellular location is the cytoplasm. The catalysed reaction is D-ribose 5-phosphate + ATP = 5-phospho-alpha-D-ribose 1-diphosphate + AMP + H(+). Its pathway is metabolic intermediate biosynthesis; 5-phospho-alpha-D-ribose 1-diphosphate biosynthesis; 5-phospho-alpha-D-ribose 1-diphosphate from D-ribose 5-phosphate (route I): step 1/1. Involved in the biosynthesis of the central metabolite phospho-alpha-D-ribosyl-1-pyrophosphate (PRPP) via the transfer of pyrophosphoryl group from ATP to 1-hydroxyl of ribose-5-phosphate (Rib-5-P). In Prochlorococcus marinus (strain MIT 9313), this protein is Ribose-phosphate pyrophosphokinase.